The following is a 251-amino-acid chain: NADPH-dependent oxidoreductase (251 aa).

This sequence belongs to the flavin oxidoreductase frp family. It depends on FMN as a cofactor.

In terms of biological role, reduces FMN, organic nitro compounds and disulfide DTNB. Involved in maintenance of the cellular redox state and the disulfide stress response. The protein is NADPH-dependent oxidoreductase (nfrA) of Staphylococcus aureus (strain MRSA252).